Here is a 116-residue protein sequence, read N- to C-terminus: Large ribosomal subunit protein bL20 (116 aa).

The protein belongs to the bacterial ribosomal protein bL20 family.

Binds directly to 23S ribosomal RNA and is necessary for the in vitro assembly process of the 50S ribosomal subunit. It is not involved in the protein synthesizing functions of that subunit. The polypeptide is Large ribosomal subunit protein bL20 (Synechococcus elongatus (strain ATCC 33912 / PCC 7942 / FACHB-805) (Anacystis nidulans R2)).